A 513-amino-acid polypeptide reads, in one-letter code: MTAGSAPPVDYTSLKKNFQPFLSRRVENRSLKSFWDASDISDDVIELAGGMPNERFFPIESMDLKISKVPFNDNPKWHNSFTTAHLDLGSPSELPIARSFQYAETKGLPPLLHFVKDFVSRINRPAFSDETESNWDVILSGGSNDSMFKVFETICDESTTVMIEEFTFTPAMSNVEATGAKVIPIKMNLTFDRESQGIDVEYLTQLLDNWSTGPYKDLNKPRVLYTIATGQNPTGMSVPQWKREKIYQLAQRHDFLIVEDDPYGYLYFPSYNPQEPLENPYHSSDLTTERYLNDFLMKSFLTLDTDARVIRLETFSKIFAPGLRLSFIVANKFLLQKILDLADITTRAPSGTSQAIVYSTIKAMAESNLSSSLSMKEAMFEGWIRWIMQIASKYNHRKNLTLKALYETESYQAGQFTVMEPSAGMFIIIKINWGNFDRPDDLPQQMDILDKFLLKNGVKVVLGYKMAVCPNYSKQNSDFLRLTIAYARDDDQLIEASKRIGSGIKEFFDNYKS.

Phosphoserine occurs at positions 90 and 92. Residues tyrosine 102, 143–144, asparagine 232, tyrosine 263, and 314–316 each bind pyridoxal 5'-phosphate; these read SN and TFS. Asparagine 232 contributes to the substrate binding site. At lysine 317 the chain carries N6-(pyridoxal phosphate)lysine. Residue arginine 324 coordinates pyridoxal 5'-phosphate. A substrate-binding site is contributed by arginine 481.

This sequence belongs to the class-I pyridoxal-phosphate-dependent aminotransferase family. Pyridoxal 5'-phosphate serves as cofactor.

It is found in the cytoplasm. It carries out the reaction an aromatic L-alpha-amino acid + 2-oxoglutarate = an aromatic oxo-acid + L-glutamate. The enzyme catalyses an aromatic L-alpha-amino acid + 4-methylsulfanyl-2-oxobutanoate = an aromatic oxo-acid + L-methionine. The catalysed reaction is L-kynurenine + 2-oxoglutarate = kynurenate + L-glutamate + H2O. It functions in the pathway amino-acid biosynthesis; L-methionine biosynthesis via salvage pathway; L-methionine from S-methyl-5-thio-alpha-D-ribose 1-phosphate: step 6/6. It participates in amino-acid degradation; L-kynurenine degradation; kynurenate from L-kynurenine: step 1/2. Functionally, general aromatic amino acid transaminase involved in several otherwise unrelated metabolic pathways. Mainly involved in tryptophan degradation. Active with phenylalanine, tyrosine and tryptophan as amino donors and with phenylpyruvate, hydroxyphenylpyruvate and pyruvate as amino acceptors. Does not accept glutamate or 2-oxoglutarate as substrates. Also active with methionine, leucine, glutamine and kynurenine. Catalyzes the formation of methionine from 2-keto-4-methylthiobutyrate (KMTB) in the methionine salvage pathway primarily using aromatic amino acids (tyrosine, phenylalanine and tryptophan) as the amino donors. Catalyzes the irreversible transamination of the L-tryptophan metabolite L-kynurenine to form kynurenic acid (KA) with pyruvate as amino acceptor. The polypeptide is Aromatic amino acid aminotransferase 2 (Saccharomyces cerevisiae (strain ATCC 204508 / S288c) (Baker's yeast)).